The chain runs to 105 residues: Large ribosomal subunit protein eL36 (105 aa).

The protein belongs to the eukaryotic ribosomal protein eL36 family. In terms of assembly, component of the large ribosomal subunit.

It is found in the cytoplasm. It localises to the cytosol. In terms of biological role, component of the large ribosomal subunit. The ribosome is a large ribonucleoprotein complex responsible for the synthesis of proteins in the cell. The sequence is that of Large ribosomal subunit protein eL36 (RPL36) from Gallus gallus (Chicken).